The following is a 192-amino-acid chain: Leucine-rich repeat-containing protein 51 (192 aa).

LRR repeat units follow at residues 49-71 (SLTQ…NQVA), 80-101 (NLAW…LTTF), and 103-124 (NLSV…NKLA). One can recognise an LRRCT domain in the interval 137–175 (NPMEEEKGYRQYVLCTLSRITTFDFAGVTKADRTTAEVW).

It localises to the cytoplasm. The sequence is that of Leucine-rich repeat-containing protein 51 from Pan troglodytes (Chimpanzee).